Here is a 189-residue protein sequence, read N- to C-terminus: dCTP deaminase (189 aa).

DCTP contacts are provided by residues lysine 112–arginine 117, threonine 136–glutamate 138, glutamine 157, tyrosine 171, and glutamine 181. Glutamate 138 functions as the Proton donor/acceptor in the catalytic mechanism.

This sequence belongs to the dCTP deaminase family. In terms of assembly, homotrimer.

The catalysed reaction is dCTP + H2O + H(+) = dUTP + NH4(+). Its pathway is pyrimidine metabolism; dUMP biosynthesis; dUMP from dCTP (dUTP route): step 1/2. Its function is as follows. Catalyzes the deamination of dCTP to dUTP. The chain is dCTP deaminase from Methylacidiphilum infernorum (isolate V4) (Methylokorus infernorum (strain V4)).